Reading from the N-terminus, the 419-residue chain is MKNQLRGPPVRAHMSTSGAAAAGGTRAGSEPGAGSGSSAGIGAGATTGAGAMPCKSAEWLQEELEARGGASLLLLDCRPHELFESSHIETAINLAIPGLMLRRLRKGNLPIRSIIPNHADKERFATRCKAATVLLYDEATAEWQPEPGAPASVLGLLLQKLRDDGCQAYYLQGGFNKFQTEYSEHCETNVDSSSSPSGSPPTSVLGLGGLRISSDCSDGESDRELPSSATESDGSPVPSSQPAFPVQILPYLYLGCAKDSTNLDVLGKYGIKYILNVTPNLPNAFEHGGEFTYKQIPISDHWSQNLSQFFPEAISFIDEARSKKCGVLVHCLAGISRSVTVTVAYLMQKMNLSLNDAYDFVKRKKSNISPNFNFMGQLLDFERTLGLSSPCDNHTPSEQLYFSTPTNHNLFPINTLEST.

The disordered stretch occupies residues 1 to 41; the sequence is MKNQLRGPPVRAHMSTSGAAAAGGTRAGSEPGAGSGSSAGI. Positions 15–30 are enriched in low complexity; that stretch reads STSGAAAAGGTRAGSE. Positions 31–41 are enriched in gly residues; that stretch reads PGAGSGSSAGI. The Rhodanese domain maps to 68 to 187; that stretch reads GGASLLLLDC…FQTEYSEHCE (120 aa). The segment at 216–240 is disordered; sequence CSDGESDRELPSSATESDGSPVPSS. The segment covering 227-240 has biased composition (polar residues); the sequence is SSATESDGSPVPSS. Positions 244–387 constitute a Tyrosine-protein phosphatase domain; that stretch reads FPVQILPYLY…LLDFERTLGL (144 aa). The active-site Phosphocysteine intermediate is Cys331. A substrate-binding site is contributed by 331 to 337; sequence CLAGISR.

Belongs to the protein-tyrosine phosphatase family. Non-receptor class dual specificity subfamily. Interacts with MAPK1/ERK2; the interaction enhances DUSP7 phosphatase activity.

The protein localises to the cytoplasm. The enzyme catalyses O-phospho-L-tyrosyl-[protein] + H2O = L-tyrosyl-[protein] + phosphate. It carries out the reaction O-phospho-L-seryl-[protein] + H2O = L-seryl-[protein] + phosphate. The catalysed reaction is O-phospho-L-threonyl-[protein] + H2O = L-threonyl-[protein] + phosphate. Strongly inhibited by sodium orthovanadate. Functionally, dual specificity protein phosphatase. Shows high activity towards MAPK1/ERK2. Also has lower activity towards MAPK14 and MAPK8. In arrested oocytes, plays a role in meiotic resumption. Promotes nuclear envelope breakdown and activation of the CDK1/Cyclin-B complex in oocytes, probably by dephosphorylating and inactivating the conventional protein kinase C (cPKC) isozyme PRKCB. May also inactivate PRKCA and/or PRKCG. Also important in oocytes for normal chromosome alignment on the metaphase plate and progression to anaphase, where it might regulate activity of the spindle-assembly checkpoint (SAC) complex. The chain is Dual specificity protein phosphatase 7 from Rattus norvegicus (Rat).